The sequence spans 205 residues: Thymidylate kinase (205 aa).

13–20 (GIDGSGKS) is a binding site for ATP.

Belongs to the thymidylate kinase family.

It catalyses the reaction dTMP + ATP = dTDP + ADP. Its function is as follows. Phosphorylation of dTMP to form dTDP in both de novo and salvage pathways of dTTP synthesis. This chain is Thymidylate kinase, found in Leptospira borgpetersenii serovar Hardjo-bovis (strain L550).